The primary structure comprises 298 residues: Bifunctional protein FolD (298 aa).

Residues 165–167 (GRG), serine 194, and isoleucine 235 contribute to the NADP(+) site.

The protein belongs to the tetrahydrofolate dehydrogenase/cyclohydrolase family. As to quaternary structure, homodimer.

The catalysed reaction is (6R)-5,10-methylene-5,6,7,8-tetrahydrofolate + NADP(+) = (6R)-5,10-methenyltetrahydrofolate + NADPH. It carries out the reaction (6R)-5,10-methenyltetrahydrofolate + H2O = (6R)-10-formyltetrahydrofolate + H(+). It functions in the pathway one-carbon metabolism; tetrahydrofolate interconversion. Functionally, catalyzes the oxidation of 5,10-methylenetetrahydrofolate to 5,10-methenyltetrahydrofolate and then the hydrolysis of 5,10-methenyltetrahydrofolate to 10-formyltetrahydrofolate. The protein is Bifunctional protein FolD of Amoebophilus asiaticus (strain 5a2).